The primary structure comprises 368 residues: MFKRSLIAASLSVAALVSAQAMAVTGGGASLPAELYKGSADSILPANFSYAVTGSGTGKNAFLTNNSSLFGTTGTVHYAGSDSVLSGSELTTYNSNYNGTYGPLIQIPSVATSVTVPYRKDGNTTLNLTSAQLCDAFSGAKTTWGQLLGTTDSTPIRIVYRTGSSGTTELFTRHLNSICPTRFATNSTFTNARLPAGGTLPSNWVGVAATSTVVSTVKATNGSLGYVSPDAVNINSNAEVSRVNGNLPTQANVSTALGSVAPPANAADRADPSKWVPVFTNPSAGYSIVGYTNFVFGQCYKDASVSTDVRAFINKHYGGTTTNAAVAAHGFIPLTPAWKSAIVSAFYTGTSENLAIGNTNVCNTKGRP.

The signal sequence occupies residues 1–23 (MFKRSLIAASLSVAALVSAQAMA).

This sequence belongs to the PstS family. Homodimer.

It is found in the secreted. The protein resides in the periplasm. It carries out the reaction a phosphate monoester + H2O = an alcohol + phosphate. Has both a phosphomonoesterase and phosphodiesterase activity. This Pseudomonas aeruginosa (strain ATCC 15692 / DSM 22644 / CIP 104116 / JCM 14847 / LMG 12228 / 1C / PRS 101 / PAO1) protein is Alkaline phosphatase L.